Reading from the N-terminus, the 123-residue chain is Methylmalonyl-CoA carboxyltransferase 1.3S subunit (123 aa).

The 78-residue stretch at 46 to 123 (GAGAGKAGEG…QGGQGLIKIG (78 aa)) folds into the Biotinyl-binding domain. Lys-89 is modified (N6-biotinyllysine).

In terms of assembly, transcarboxylase is composed of three subunits: 1.3S, 5S, and 12S. The core of the enzyme is composed of six 12S subunits. On each side of the core there are three pairs of 5S subunits. Each 5S dimer is attached to the core by two 1.3S subunits. Thus the total number of chains is 30 (6 + 12 + 12).

It carries out the reaction (S)-methylmalonyl-CoA + pyruvate = propanoyl-CoA + oxaloacetate. Functionally, the biotinyl 1.3S subunit serves as a carboxyl carrier between the substrate-binding sites on the 12S and 5S subunits. In Propionibacterium freudenreichii subsp. shermanii, this protein is Methylmalonyl-CoA carboxyltransferase 1.3S subunit.